Consider the following 315-residue polypeptide: Methionyl-tRNA formyltransferase (315 aa).

Residue 113–116 (SILP) coordinates (6S)-5,6,7,8-tetrahydrofolate.

This sequence belongs to the Fmt family.

It carries out the reaction L-methionyl-tRNA(fMet) + (6R)-10-formyltetrahydrofolate = N-formyl-L-methionyl-tRNA(fMet) + (6S)-5,6,7,8-tetrahydrofolate + H(+). In terms of biological role, attaches a formyl group to the free amino group of methionyl-tRNA(fMet). The formyl group appears to play a dual role in the initiator identity of N-formylmethionyl-tRNA by promoting its recognition by IF2 and preventing the misappropriation of this tRNA by the elongation apparatus. This chain is Methionyl-tRNA formyltransferase, found in Vibrio vulnificus (strain CMCP6).